The sequence spans 222 residues: PKHD-type hydroxylase PCC8801_2196 (222 aa).

A Fe2OG dioxygenase domain is found at R78–S175. Fe cation is bound by residues H96, D98, and H156. R166 contributes to the 2-oxoglutarate binding site.

The cofactor is Fe(2+). It depends on L-ascorbate as a cofactor.

The chain is PKHD-type hydroxylase PCC8801_2196 from Rippkaea orientalis (strain PCC 8801 / RF-1) (Cyanothece sp. (strain PCC 8801)).